A 1162-amino-acid polypeptide reads, in one-letter code: Isoleucine--tRNA ligase (1162 aa).

A 'HIGH' region motif is present at residues 50-60 (PSANGMPGIHH). The 'KMSKS' region motif lies at 710–714 (KMSKR). K713 lines the ATP pocket.

The protein belongs to the class-I aminoacyl-tRNA synthetase family. IleS type 2 subfamily. In terms of assembly, monomer. The cofactor is Zn(2+).

The protein localises to the cytoplasm. The enzyme catalyses tRNA(Ile) + L-isoleucine + ATP = L-isoleucyl-tRNA(Ile) + AMP + diphosphate. Functionally, catalyzes the attachment of isoleucine to tRNA(Ile). As IleRS can inadvertently accommodate and process structurally similar amino acids such as valine, to avoid such errors it has two additional distinct tRNA(Ile)-dependent editing activities. One activity is designated as 'pretransfer' editing and involves the hydrolysis of activated Val-AMP. The other activity is designated 'posttransfer' editing and involves deacylation of mischarged Val-tRNA(Ile). The chain is Isoleucine--tRNA ligase from Bacteroides thetaiotaomicron (strain ATCC 29148 / DSM 2079 / JCM 5827 / CCUG 10774 / NCTC 10582 / VPI-5482 / E50).